A 307-amino-acid chain; its full sequence is Ribonuclease HIII (307 aa).

The RNase H type-2 domain occupies 93 to 307 (MSVIGSDEVG…ANTQKAKKWL (215 aa)). Residues Asp-99, Glu-100, and Asp-204 each contribute to the a divalent metal cation site.

Belongs to the RNase HII family. RnhC subfamily. Mn(2+) is required as a cofactor. Requires Mg(2+) as cofactor.

Its subcellular location is the cytoplasm. It carries out the reaction Endonucleolytic cleavage to 5'-phosphomonoester.. In terms of biological role, endonuclease that specifically degrades the RNA of RNA-DNA hybrids. This is Ribonuclease HIII from Bacillus pumilus (strain SAFR-032).